The chain runs to 144 residues: UPF0735 ACT domain-containing protein NT01CX_1681 (144 aa).

An ACT domain is found at 68–143 (TIGFLLSHKA…NVVKVSLIAM (76 aa)).

Belongs to the UPF0735 family.

This is UPF0735 ACT domain-containing protein NT01CX_1681 from Clostridium novyi (strain NT).